Consider the following 301-residue polypeptide: Ornithine carbamoyltransferase (301 aa).

Carbamoyl phosphate contacts are provided by residues arginine 100 and 127–130 (HPCQ). Residues asparagine 158, aspartate 221, and 225 to 226 (SM) each bind L-ornithine. Carbamoyl phosphate is bound by residues 260–261 (CL) and arginine 288.

It belongs to the aspartate/ornithine carbamoyltransferase superfamily. OTCase family.

The protein resides in the cytoplasm. The catalysed reaction is carbamoyl phosphate + L-ornithine = L-citrulline + phosphate + H(+). It functions in the pathway amino-acid biosynthesis; L-arginine biosynthesis; L-arginine from L-ornithine and carbamoyl phosphate: step 1/3. Its function is as follows. Reversibly catalyzes the transfer of the carbamoyl group from carbamoyl phosphate (CP) to the N(epsilon) atom of ornithine (ORN) to produce L-citrulline. The polypeptide is Ornithine carbamoyltransferase (Shewanella oneidensis (strain ATCC 700550 / JCM 31522 / CIP 106686 / LMG 19005 / NCIMB 14063 / MR-1)).